Reading from the N-terminus, the 582-residue chain is Threonine--tRNA ligase (582 aa).

Residues 185–478 (DHRKLGKELD…LVEHYGGAFP (294 aa)) form a catalytic region. Zn(2+)-binding residues include cysteine 278, histidine 329, and histidine 455.

It belongs to the class-II aminoacyl-tRNA synthetase family. As to quaternary structure, homodimer. Requires Zn(2+) as cofactor.

Its subcellular location is the cytoplasm. It carries out the reaction tRNA(Thr) + L-threonine + ATP = L-threonyl-tRNA(Thr) + AMP + diphosphate + H(+). Its function is as follows. Catalyzes the attachment of threonine to tRNA(Thr) in a two-step reaction: L-threonine is first activated by ATP to form Thr-AMP and then transferred to the acceptor end of tRNA(Thr). Also edits incorrectly charged L-seryl-tRNA(Thr). This chain is Threonine--tRNA ligase, found in Borrelia garinii subsp. bavariensis (strain ATCC BAA-2496 / DSM 23469 / PBi) (Borreliella bavariensis).